Reading from the N-terminus, the 183-residue chain is Transcription factor E (183 aa).

One can recognise an HTH TFE/IIEalpha-type domain in the interval 4–97 (YIELVRRYVY…SWSIKDEDIR (94 aa)).

It belongs to the TFE family. Monomer. Interaction with RNA polymerase subunits RpoF and RpoE is necessary for Tfe stimulatory transcription activity. Able to interact with Tbp and RNA polymerase in the absence of DNA promoter. Interacts both with the preinitiation and elongation complexes.

Transcription factor that plays a role in the activation of archaeal genes transcribed by RNA polymerase. Facilitates transcription initiation by enhancing TATA-box recognition by TATA-box-binding protein (Tbp), and transcription factor B (Tfb) and RNA polymerase recruitment. Not absolutely required for transcription in vitro, but particularly important in cases where Tbp or Tfb function is not optimal. It dynamically alters the nucleic acid-binding properties of RNA polymerases by stabilizing the initiation complex and destabilizing elongation complexes. Seems to translocate with the RNA polymerase following initiation and acts by binding to the non template strand of the transcription bubble in elongation complexes. The protein is Transcription factor E of Caldivirga maquilingensis (strain ATCC 700844 / DSM 13496 / JCM 10307 / IC-167).